The following is a 115-amino-acid chain: Large ribosomal subunit protein uL22 (115 aa).

This sequence belongs to the universal ribosomal protein uL22 family. Part of the 50S ribosomal subunit.

In terms of biological role, this protein binds specifically to 23S rRNA; its binding is stimulated by other ribosomal proteins, e.g. L4, L17, and L20. It is important during the early stages of 50S assembly. It makes multiple contacts with different domains of the 23S rRNA in the assembled 50S subunit and ribosome. Its function is as follows. The globular domain of the protein is located near the polypeptide exit tunnel on the outside of the subunit, while an extended beta-hairpin is found that lines the wall of the exit tunnel in the center of the 70S ribosome. The protein is Large ribosomal subunit protein uL22 of Streptomyces avermitilis (strain ATCC 31267 / DSM 46492 / JCM 5070 / NBRC 14893 / NCIMB 12804 / NRRL 8165 / MA-4680).